The following is a 218-amino-acid chain: Small ribosomal subunit protein uS5 (218 aa).

The segment at 1–49 is disordered; it reads MPGRQRRDGGSGPAGQNGPNTGDNRGGGDRRGGGRDDRRGGQSAEKSNH. Residues 26–49 show a composition bias toward basic and acidic residues; it reads GGGDRRGGGRDDRRGGQSAEKSNH. Residues 49-112 form the S5 DRBM domain; the sequence is HIERVVTINR…EEARKSFFRV (64 aa).

This sequence belongs to the universal ribosomal protein uS5 family. As to quaternary structure, part of the 30S ribosomal subunit. Contacts proteins S4 and S8.

Functionally, with S4 and S12 plays an important role in translational accuracy. In terms of biological role, located at the back of the 30S subunit body where it stabilizes the conformation of the head with respect to the body. The polypeptide is Small ribosomal subunit protein uS5 (Rhodococcus jostii (strain RHA1)).